The following is a 116-amino-acid chain: Small ribosomal subunit protein bS16 (116 aa).

The interval 88–116 (RNNPKAAVPGKRMAELAKKKAERAAASAE) is disordered. The segment covering 99-110 (RMAELAKKKAER) has biased composition (basic and acidic residues).

The protein belongs to the bacterial ribosomal protein bS16 family.

This Cereibacter sphaeroides (strain ATCC 17025 / ATH 2.4.3) (Rhodobacter sphaeroides) protein is Small ribosomal subunit protein bS16.